Consider the following 630-residue polypeptide: PAN2-PAN3 deadenylation complex subunit PAN3 (630 aa).

The C3H1-type zinc-finger motif lies at 7-36 (SAKDTLCKNILIYGYCKFENKGCAFSHHKP). Disordered regions lie at residues 38–72 (VGQP…PSFQ) and 135–171 (GFGS…QSSG). The segment covering 44 to 56 (SASSSSGYSGNSS) has biased composition (low complexity). A compositionally biased stretch (polar residues) spans 140–149 (YPSSPNTSGA). The tract at residues 231-501 (QTLPRSNLPE…LDRFSQRYLT (271 aa)) is pseudokinase domain. ATP-binding positions include R283, 333 to 340 (DYFPNSST), and 388 to 389 (TK). Residues 502–540 (TRLFSTINNLEDSTDFMESQITTELENARLFRLLTKLNF) adopt a coiled-coil conformation. The knob domain stretch occupies residues 541–630 (IIDRPEAKDW…DSVFRNLTRD (90 aa)).

The protein belongs to the protein kinase superfamily. PAN3 family. In terms of assembly, homodimer. Forms a heterotrimer with a catalytic subunit PAN2 to form the poly(A)-nuclease (PAN) deadenylation complex. Interacts (via PAM-2 motif) with poly(A)-binding protein PAB1 (via PABC domain), conferring substrate specificity of the enzyme complex.

It is found in the cytoplasm. In terms of biological role, regulatory subunit of the poly(A)-nuclease (PAN) deadenylation complex, one of two cytoplasmic mRNA deadenylases involved in mRNA turnover. PAN specifically shortens poly(A) tails of RNA and the activity is stimulated by poly(A)-binding protein PAB1. PAN deadenylation is followed by rapid degradation of the shortened mRNA tails by the CCR4-NOT complex. Deadenylated mRNAs are then degraded by two alternative mechanisms, namely exosome-mediated 3'-5' exonucleolytic degradation, or deadenylation-dependent mRNA decaping and subsequent 5'-3' exonucleolytic degradation by XRN1. May also be involved in post-transcriptional maturation of mRNA poly(A) tails. PAN3 acts as a positive regulator for PAN activity, recruiting the catalytic subunit PAN2 to mRNA via its interaction with RNA and with PAB1. This chain is PAN2-PAN3 deadenylation complex subunit PAN3, found in Scheffersomyces stipitis (strain ATCC 58785 / CBS 6054 / NBRC 10063 / NRRL Y-11545) (Yeast).